The chain runs to 215 residues: MDDHLKLGDSGVVKNVARLGRRGQRARQAAEQTSLEEPRHVRKSSSSTSMGEGPPPKPARRQGGWAEETSGSAKSGRRPAMVQDVEDRRLRPQTPQGSDGEGDIPVIPDLDEVQEEDLNMQVAAPPSIQVNRVMTYRDLDNDLMKYSAFRTLDGEIDLKLLTKVLAPEQEVREEDVGWDWDHLFTEVSSELLTEWDQGEKEEQVCVMRTSLPKMG.

The tract at residues 1–107 (MDDHLKLGDS…SDGEGDIPVI (107 aa)) is disordered.

It belongs to the IFT43 family. Component of IFT complex A.

Component of IFT complex A (IFT-A) involved in retrograde ciliary transport along microtubules from the ciliary tip to the base. In Salmo salar (Atlantic salmon), this protein is Intraflagellar transport protein 43 homolog B (ift43b).